The following is a 252-amino-acid chain: CLAVATA3/ESR (CLE)-related protein 4A-2 (252 aa).

Residues 1–21 (MAKNAMLCLLILRVVLALAFA) form the signal peptide. Residues 21 to 83 (ATNKKGDEEP…SNQLPNNNWM (63 aa)) are required for secretion from the host cytoplasm to the host apoplasm. Asn-32 is a glycosylation site (N-linked (GlcNAc...) asparagine). The disordered stretch occupies residues 116–252 (RKTGMHSQRH…APAGPDPIHH (137 aa)). 4 stretches are compositionally biased toward basic and acidic residues: residues 125–137 (HHEETTLEQEKRV), 144–179 (PIHHQDTTLEQEKRAVPAGPDPKHHEETTLEQEKRV), 186–200 (PIHHQDTTLEQEKRA), and 207–242 (PTHHEETTLEQEKRAVPAGPDPKHHEETTFEQEKRG). One copy of the A-1 repeat lies at 127–135 (EETTLEQEK). The interval 127–219 (EETTLEQEKR…HEETTLEQEK (93 aa)) is 6 X approximate repeat A. Residues 136–147 (RVAGAGPDPIHH) form a CLE-1 repeat. Residues 136-252 (RVAGAGPDPI…APAGPDPIHH (117 aa)) form a 6 X approximate repeat CLE region. One copy of the A-2 repeat lies at 148-156 (QDTTLEQEK). Residues 157–168 (RAVPAGPDPKHH) form a CLE-2 repeat. The A-3 repeat unit spans residues 169 to 177 (EETTLEQEK). The CLE-3 repeat unit spans residues 178-189 (RVAGAGPDPIHH). Residues 190 to 198 (QDTTLEQEK) form an A-4 repeat. The CLE-4 repeat unit spans residues 199–210 (RAVPAGPDPTHH). The A-5 repeat unit spans residues 211-219 (EETTLEQEK). The stretch at 220 to 231 (RAVPAGPDPKHH) is one CLE-5 repeat. An A-6 repeat occupies 232–240 (EETTFEQEK). A CLE-6 repeat occupies 241-252 (RGAPAGPDPIHH).

This sequence belongs to the CLV3/ESR signal peptide family. In terms of tissue distribution, highly expressed exclusively within the dorsal esophageal gland cell during syncytium formation in host plants.

The protein localises to the secreted. It localises to the host cytoplasm. The protein resides in the host extracellular space. It is found in the extracellular space. Its subcellular location is the apoplast. Functionally, mimics host plant CLE extracellular signal peptides that regulate cell fate. May play a role in the differentiation or division of feeding cells (syncytia) induced in plant roots during infection. The chain is CLAVATA3/ESR (CLE)-related protein 4A-2 (CLE-4A-2) from Globodera rostochiensis (Golden nematode worm).